Reading from the N-terminus, the 141-residue chain is D-aminoacyl-tRNA deacylase (141 aa).

The Gly-cisPro motif, important for rejection of L-amino acids signature appears at 133–134 (GP).

Belongs to the DTD family. In terms of assembly, homodimer.

It localises to the cytoplasm. The catalysed reaction is glycyl-tRNA(Ala) + H2O = tRNA(Ala) + glycine + H(+). The enzyme catalyses a D-aminoacyl-tRNA + H2O = a tRNA + a D-alpha-amino acid + H(+). Functionally, an aminoacyl-tRNA editing enzyme that deacylates mischarged D-aminoacyl-tRNAs. Also deacylates mischarged glycyl-tRNA(Ala), protecting cells against glycine mischarging by AlaRS. Acts via tRNA-based rather than protein-based catalysis; rejects L-amino acids rather than detecting D-amino acids in the active site. By recycling D-aminoacyl-tRNA to D-amino acids and free tRNA molecules, this enzyme counteracts the toxicity associated with the formation of D-aminoacyl-tRNA entities in vivo and helps enforce protein L-homochirality. This chain is D-aminoacyl-tRNA deacylase, found in Thermobifida fusca (strain YX).